A 282-amino-acid chain; its full sequence is Large ribosomal subunit protein uL2 (282 aa).

Disordered regions lie at residues glutamate 31–glycine 56 and serine 226–methionine 282. Polar residues predominate over residues leucine 35–arginine 44. The span at threonine 257–lysine 266 shows a compositional bias: basic residues.

Belongs to the universal ribosomal protein uL2 family. Part of the 50S ribosomal subunit. Forms a bridge to the 30S subunit in the 70S ribosome.

In terms of biological role, one of the primary rRNA binding proteins. Required for association of the 30S and 50S subunits to form the 70S ribosome, for tRNA binding and peptide bond formation. It has been suggested to have peptidyltransferase activity; this is somewhat controversial. Makes several contacts with the 16S rRNA in the 70S ribosome. The protein is Large ribosomal subunit protein uL2 of Levilactobacillus brevis (strain ATCC 367 / BCRC 12310 / CIP 105137 / JCM 1170 / LMG 11437 / NCIMB 947 / NCTC 947) (Lactobacillus brevis).